A 793-amino-acid chain; its full sequence is Protein smoothened (793 aa).

Residues 1-32 (MAAGRPVRGPELAPRRLLQLLLLVLLGGPGRG) form the signal peptide. Residues 33-237 (AALSGNVTGP…EAEHQDMHSY (205 aa)) lie on the Extracellular side of the membrane. Residues 35–61 (LSGNVTGPGPHSASGSSRRDVPVTSPP) form a disordered region. Residue N38 is glycosylated (N-linked (GlcNAc...) asparagine). Cystine bridges form between C68/C182, C74/C138, C82/C131, C122/C158, and C151/C173. The FZ domain occupies 69 to 185 (GRAAHCEPLR…DHFPEGCPNE (117 aa)). D99 contacts cholesterol. N-linked (GlcNAc...) asparagine glycosylation occurs at N192. Intrachain disulfides connect C197–C217, C221–C299, and C318–C394. A helical membrane pass occupies residues 238-258 (IAAFGAVTGLCTLFTLATFVA). Residues 259–265 (DWRNSNR) lie on the Cytoplasmic side of the membrane. Residues 266–286 (YPAVILFYVNACFFVGSIGWL) traverse the membrane as a helical segment. The Extracellular portion of the chain corresponds to 287–318 (AQFMDGARREIVCRADGTMRFGEPTSSETLSC). Residues 319-339 (VIIFVIVYYALMAGVVWFVVL) form a helical membrane-spanning segment. At 340-362 (TYAWHTSFKALGTTYQPLSGKTS) the chain is on the cytoplasmic side. A helical transmembrane segment spans residues 363–383 (YFHLLTWSLPFVLTVAILAVA). At 384–406 (QVDGDSVSGICFVGYKNYRYRAG) the chain is on the extracellular side. Residue Y398 coordinates cholesterol. The chain crosses the membrane as a helical span at residues 407-427 (FVLAPIGLVLIVGGYFLIRGV). The Cytoplasmic segment spans residues 428–455 (MTLFSIKSNHPGLLSEKAASKINETMLR). Residues 456–476 (LGIFGFLAFGFVLITFSCHFY) traverse the membrane as a helical segment. Over 477 to 528 (DFFNQAEWERSFRDYVLCQANVTIGLPTKKPIPDCEIKNRPSLLVEKINLFA) the chain is Extracellular. C494 and C511 form a disulfide bridge. N-linked (GlcNAc...) asparagine glycosylation is present at N497. The helical transmembrane segment at 529–549 (MFGTGIAMSTWVWTKATLLIW) threads the bilayer. The interval 542–573 (TKATLLIWRRTWCRLTGHSDDEPKRIKKSKMI) is interaction with BBS5 and BBS7. Residues 550 to 793 (RRTWCRLTGH…AEILDADSDF (244 aa)) lie on the Cytoplasmic side of the membrane. Phosphoserine occurs at positions 560, 578, and 594. Positions 574–657 (AKAFSKRREL…TPVPPEEQAN (84 aa)) are required for interaction with PRKACA. The interval 585 to 597 (QNPGQELSFSMHT) is interaction with DLG5. T597 bears the Phosphothreonine mark. A phosphoserine mark is found at S599 and S642. 2 positions are modified to phosphothreonine: T644 and T648. At S666 the chain carries Phosphoserine. Positions 674–684 (GRKKKRRKRKK) are enriched in basic residues. The tract at residues 674-703 (GRKKKRRKRKKEVCPLRPAPELHHSAPVPA) is disordered.

It belongs to the G-protein coupled receptor Fz/Smo family. Homodimer. Interacts (via C-terminus) with protein kinase A catalytic subunit PRKACA; interacts with free PRKACA subunits and the interaction leads to sequestration of PRKACA at the membrane, preventing PRKACA-mediated phosphorylation of GLI transcription factors. Interacts with ARRB2. Interacts with BBS5 and BBS7; the interactions are indicative for the association of SMO with the BBsome complex to facilitate ciliary localization of SMO. Interacts with KIF7, DLG5 and SDCBP. Interacts with GAS8/DRC4. Post-translationally, phosphorylation by GRK kinases is required for interaction with protein kinase A catalytic subunit PRKACA. As to expression, during early somite stages of embryonic development, modestly up-regulated in the cells of the node (at protein level).

The protein localises to the cell membrane. It localises to the cell projection. The protein resides in the cilium. Functionally, g protein-coupled receptor which associates with the patched protein (PTCH) to transduce hedgehog protein signaling. Binding of sonic hedgehog (SHH) to its receptor patched prevents inhibition of smoothened (SMO) by patched. When active, SMO binds to and sequesters protein kinase A catalytic subunit PRKACA at the cell membrane, preventing PRKACA-mediated phosphorylation of GLI transcription factors which releases the GLI proteins from PRKACA-mediated inhibition and allows for transcriptional activation of hedgehog pathway target genes. Required for the accumulation of KIF7, GLI2 and GLI3 in the cilia. Interacts with DLG5 at the ciliary base to induce the accumulation of KIF7 and GLI2 at the ciliary tip for GLI2 activation. The protein is Protein smoothened (Smo) of Mus musculus (Mouse).